Reading from the N-terminus, the 437-residue chain is Regulator of phospholipase D SRF1 (437 aa).

Positions 1–24 are disordered; that stretch reads MGDSNSSQEAYSDTTSTNASRIAD. At 1–267 the chain is on the cytoplasmic side; the sequence is MGDSNSSQEA…LTSLLLDNQY (267 aa). Ser-45 and Ser-167 each carry phosphoserine. A helical membrane pass occupies residues 268-288; that stretch reads LILGLRIFTGILSCISLALAI. Topologically, residues 289 to 308 are extracellular; that stretch reads KIFQNSRSNNTISESKIGQQ. N-linked (GlcNAc...) asparagine glycosylation is present at Asn-297. Residues 309–329 traverse the membrane as a helical segment; the sequence is PSTIMAICVNAVAIAYIIYIA. Residues 330 to 348 lie on the Cytoplasmic side of the membrane; it reads HDEFAGKPVGLRNPLSKLK. The chain crosses the membrane as a helical span at residues 349–369; that stretch reads LILLDLLFIIFSSANLALAFN. At 370–403 the chain is on the extracellular side; that stretch reads TRFDKEWVCTSIRRSNGSTYGYPKIPRICRKQEA. A glycan (N-linked (GlcNAc...) asparagine) is linked at Asn-385. Residues 404–424 traverse the membrane as a helical segment; sequence LSAFLFVALFMWVITFSISIV. Residues 425–437 are Cytoplasmic-facing; the sequence is RVVEKVSSITNRN.

In terms of assembly, interacts with SPO14.

Its subcellular location is the membrane. Functionally, regulator of phospholipase D (SPO14) which is required for SPO14 catalytic activity in mitotic cells. Essential to buffer the toxic effects of C16:0 platelet activating factor. The polypeptide is Regulator of phospholipase D SRF1 (SRF1) (Saccharomyces cerevisiae (strain ATCC 204508 / S288c) (Baker's yeast)).